Consider the following 292-residue polypeptide: 4-hydroxy-tetrahydrodipicolinate synthase (292 aa).

Residue Thr-45 participates in pyruvate binding. Tyr-133 serves as the catalytic Proton donor/acceptor. The Schiff-base intermediate with substrate role is filled by Lys-162. Residue Ile-204 coordinates pyruvate.

The protein belongs to the DapA family. As to quaternary structure, homotetramer; dimer of dimers.

Its subcellular location is the cytoplasm. It catalyses the reaction L-aspartate 4-semialdehyde + pyruvate = (2S,4S)-4-hydroxy-2,3,4,5-tetrahydrodipicolinate + H2O + H(+). It participates in amino-acid biosynthesis; L-lysine biosynthesis via DAP pathway; (S)-tetrahydrodipicolinate from L-aspartate: step 3/4. Its function is as follows. Catalyzes the condensation of (S)-aspartate-beta-semialdehyde [(S)-ASA] and pyruvate to 4-hydroxy-tetrahydrodipicolinate (HTPA). The polypeptide is 4-hydroxy-tetrahydrodipicolinate synthase (Oleidesulfovibrio alaskensis (strain ATCC BAA-1058 / DSM 17464 / G20) (Desulfovibrio alaskensis)).